We begin with the raw amino-acid sequence, 438 residues long: MKPLIALVGRPNVGKSTLFNRILRQKSAIVDPTPGVTRDRHINPGEWQGKQFLLMDTGGYAPENDSLSVAMLDQTMRAIADADAIIFMVDARSGLTYLDLDIAKILKQTFSDKKIFFAINKVDNPQLALEAAAMVRSGFTEPYLISARDGGGVADMLDDILETLPCPESEDEELDDDSIKLAVLGRPNVGKSSLVNALLGTDRQIVSDVPGTTRDAIDSVLKRNGKEYILIDTAGLRKRTKIDPGIEYYSSLRTERAIERCQVALVLLDAQLGLESQDMKIIHMAIERKKGVLILVNKWDLVEKDSKTSKKFTDNLMMQLGNIGYIPIIFTSALTKKNCYRAIDTAAQIAINRRQKISTSNLNRFLQEALAMRHPASKSGKELKIKYMTQIEAGHPVFAFFCNDPQLLENNFKRFLEKRLRESFDFEGLPITMRFLRK.

2 consecutive EngA-type G domains span residues 3 to 168 (PLIA…PCPE) and 179 to 354 (IKLA…INRR). GTP is bound by residues 9 to 16 (GRPNVGKS), 56 to 60 (DTGGY), 120 to 123 (NKVD), 185 to 192 (GRPNVGKS), 232 to 236 (DTAGL), and 297 to 300 (NKWD). In terms of domain architecture, KH-like spans 355–438 (QKISTSNLNR…LPITMRFLRK (84 aa)).

This sequence belongs to the TRAFAC class TrmE-Era-EngA-EngB-Septin-like GTPase superfamily. EngA (Der) GTPase family. In terms of assembly, associates with the 50S ribosomal subunit.

Functionally, GTPase that plays an essential role in the late steps of ribosome biogenesis. The sequence is that of GTPase Der from Chlorobaculum parvum (strain DSM 263 / NCIMB 8327) (Chlorobium vibrioforme subsp. thiosulfatophilum).